The sequence spans 331 residues: Adenosine deaminase (331 aa).

The Zn(2+) site is built by His-12 and His-14. Residues His-14, Asp-16, and Gly-170 each contribute to the substrate site. His-197 is a Zn(2+) binding site. The active-site Proton donor is the Glu-200. Zn(2+) is bound at residue Asp-278. Asp-279 contributes to the substrate binding site.

Belongs to the metallo-dependent hydrolases superfamily. Adenosine and AMP deaminases family. Adenosine deaminase subfamily. Zn(2+) serves as cofactor.

The catalysed reaction is adenosine + H2O + H(+) = inosine + NH4(+). It catalyses the reaction 2'-deoxyadenosine + H2O + H(+) = 2'-deoxyinosine + NH4(+). Functionally, catalyzes the hydrolytic deamination of adenosine and 2-deoxyadenosine. This Shewanella sp. (strain ANA-3) protein is Adenosine deaminase.